We begin with the raw amino-acid sequence, 119 residues long: MSRTKGGTVTHRRHKKVIDAAKGYYGARSTNFRTATQAVDKANQYATRDRKNRKRQFRALWIQRINAAVRQHDEALTYSRFINGLAKAGIEVDRKVLADLAVHEPDAFSAIVDQAKAAL.

Belongs to the bacterial ribosomal protein bL20 family.

Its function is as follows. Binds directly to 23S ribosomal RNA and is necessary for the in vitro assembly process of the 50S ribosomal subunit. It is not involved in the protein synthesizing functions of that subunit. This Jannaschia sp. (strain CCS1) protein is Large ribosomal subunit protein bL20.